The primary structure comprises 320 residues: Protein MRG1 (320 aa).

Residues 1-28 (MGSSSKEETASDGDTASGGASPSNDGRL) are disordered. The segment covering 12–24 (DGDTASGGASPSN) has biased composition (polar residues). The 51-residue stretch at 30 to 80 (SEGERVLAYHGPRVYGAKVQKVELRKKEWKYFVHYLGWNKNWDEWVSADRL) folds into the Tudor-knot domain. Over residues 93–104 (ALDKKQGVEKGT) the composition is skewed to basic and acidic residues. The disordered stretch occupies residues 93 to 147 (ALDKKQGVEKGTKSGRSAQTKTRSSADTKADKDDTKTNAAKGKKRKHESGNEKDN). Residues 106 to 115 (SGRSAQTKTR) show a composition bias toward polar residues. Residues 116 to 128 (SSADTKADKDDTK) are compositionally biased toward basic and acidic residues. Residues 150-318 (AEKLMKIQIP…KVSDGKGKGK (169 aa)) enclose the MRG domain.

As to quaternary structure, interacts with HAM1 and HAM2. Interacts (via MRG domain) with CO. Component of the NuA4 histone acetyltransferase complex. As to expression, ubiquitous. Mainly expressed in the vasculature of cotyledons and leaves, and in roots and inflorescences.

It localises to the nucleus. Chromatin remodeling factor. Acts as a 'reader' protein by binding to H3K36me3 and H3K36me3 to control histone H4 acetylation. Increases the transcriptional levels of the flowering time genes FLC and FT. Binds the chromatin at the FT promoter upon interaction with CO. The protein is Protein MRG1 of Arabidopsis thaliana (Mouse-ear cress).